Reading from the N-terminus, the 643-residue chain is MQLSWKDIPTVAPANDLLDIVLNRTQRKTPTVIRPGFNITRIRAFYMRKVKFTGEGFVEKFDDILKGFPNINDVHPFHRDLMDTLYEKNHFKVSLAAVSRAKTLVEQVERDYTRLLKFGQSLFQCKQLKRAALGRMATIVKKLKDPLVYLEQVRQHLGRMPSIDPNTRTLLICGYPNVGKSSFLRCITKADVEVQPYAFTTKSLYVGHFDYKYLRFQAIDTPGILDRPTDEMNNVEMQSIYAIAHLRSTVMYFMDLSEQCGFSIEAQVKLFHSIKPLFANKSVMVVINKTDIIKPEDLDEERKKLLDTVLEVPGVEIMTTSCHEEDNVMAVRNKACEKLLASRIENKLKSQARITNVLNKIHVAQPQKRDDGIDRTPYIPEAIAKMKKYDPEDPNRRKLAKEIEIENGGAGVYNVNLKDKYLLEDDEWKNDVMPEILDGKNVYDFLDPEIAIKLQALEEEEERLESEGFYESDEEETYEGFDADEISEIREKAEWIRDRQKKMINASRNRKALKNRGTMPRSKLAKTYGDMEKHMSSLGHDMTALQDKQRVAAEKNRYEQTGADVVYGDQEDSAPAGKLRQTDRLTDGVADGSMRSKAERMAKLERRERNRMARAGESDRHATASLPKHLFSGKRGVGKTDFR.

An OBG-type G domain is found at R168–L340. GTP is bound by residues G174–S181, D220–I224, and N288–D291. The segment at G568–R643 is disordered. A compositionally biased stretch (basic and acidic residues) spans M594–A622.

Belongs to the TRAFAC class OBG-HflX-like GTPase superfamily. OBG GTPase family. NOG subfamily.

It is found in the nucleus. It localises to the nucleolus. Involved in the biogenesis of the 60S ribosomal subunit. The polypeptide is Nucleolar GTP-binding protein 1 (NOG1) (Kluyveromyces lactis (strain ATCC 8585 / CBS 2359 / DSM 70799 / NBRC 1267 / NRRL Y-1140 / WM37) (Yeast)).